Here is a 339-residue protein sequence, read N- to C-terminus: MAPVLQSSQPWVEKYRPKQVKDVAHQEEVVRVLTNTLQTADCPHMLFYGPPGTGKTTTALAIAHQLFGPELYKSRVLELNASDDRGINVVRTKIKDFAAVAVGSNHRQSGYPCPSFKIIILDEADSMTEDAQNALRRTMETYSKVTRFFFICNYISRIIEPLASRCAKFRFKPLSEEVMSNRILHICNEEGLSLDGEALSTLSSISQGDLRRAITYLQSATRLFGSTITSTDLLNVSGVVPLEVVNKLFTACKSGDFDIANKEVDNIVAEGYPASQIINQLFDIVAEADSDITDMQKAKICKCLAETDKRLVDGADEYLQLLDVASSTICALSEMAQDF.

49-56 is a binding site for ATP; it reads GPPGTGKT.

The protein belongs to the activator 1 small subunits family. In terms of assembly, heterotetramer of subunits RFC2, RFC3, RFC4 and RFC5 that can form a complex with RFC1.

The protein localises to the nucleus. Its function is as follows. May be involved in DNA replication and thus regulate cell proliferation. The chain is Replication factor C subunit 4 (RFC4) from Arabidopsis thaliana (Mouse-ear cress).